The sequence spans 936 residues: Probable outer membrane protein pmp7 (936 aa).

The signal sequence occupies residues Met1–Ala23. The region spanning Gly636–Phe936 is the Autotransporter domain.

It belongs to the PMP outer membrane protein family.

Its subcellular location is the secreted. The protein localises to the cell wall. It localises to the cell outer membrane. In Chlamydia pneumoniae (Chlamydophila pneumoniae), this protein is Probable outer membrane protein pmp7 (pmp7).